Reading from the N-terminus, the 318-residue chain is Large ribosomal subunit protein uL10 (318 aa).

Phosphotyrosine is present on Tyr-24. Phosphothreonine is present on Thr-59. Lys-264 is covalently cross-linked (Glycyl lysine isopeptide (Lys-Gly) (interchain with G-Cter in ubiquitin)). The tract at residues 293–318 (TAAPAKVEAKEESEESDEDMGFGLFD) is disordered. Residue Lys-298 forms a Glycyl lysine isopeptide (Lys-Gly) (interchain with G-Cter in SUMO1); alternate linkage. Lys-298 is covalently cross-linked (Glycyl lysine isopeptide (Lys-Gly) (interchain with G-Cter in SUMO2); alternate). Residues 303–312 (EESEESDEDM) are compositionally biased toward acidic residues. Phosphoserine is present on residues Ser-305 and Ser-308.

It belongs to the universal ribosomal protein uL10 family. In terms of assembly, P0 forms a pentameric complex by interaction with dimers of P1 and P2. Identified in a IGF2BP1-dependent mRNP granule complex containing untranslated mRNAs. Interacts with APEX1. Interacts with FMR1. In terms of processing, ubiquitinated at Lys-264 by RNF14 and RNF25 in response to ribosome collisions (ribosome stalling).

Its subcellular location is the nucleus. The protein resides in the cytoplasm. Ribosomal protein P0 is the functional equivalent of E.coli protein L10. The polypeptide is Large ribosomal subunit protein uL10 (RPLP0) (Bos taurus (Bovine)).